Reading from the N-terminus, the 356-residue chain is MSQVHRILNCRGTRIHAVADSPPDQQGPLVVLLHGFPESWYSWRHQIPALAGAGYRVVAIDQRGYGRSSKYRVQKAYRIKELVGDVVGVLDSYGAEQAFVVGHDWGAPVAWTFAWLHPDRCAGVVGISVPFAGRGVIGLPGSPFGERRPSDYHLELAGPGRVWYQDYFAVQDGIITEIEEDLRGWLLGLTYTVSGEGMMAATKAAVDAGVDLESMDPIDVIRAGPLCMAEGARLKDAFVYPETMPAWFTEADLDFYTGEFERSGFGGPLSFYHNIDNDWHDLADQQGKPLTPPALFIGGQYDVGTIWGAQAIERAHEVMPNYRGTHMIADVGHWIQQEAPEETNRLLLDFLGGLRP.

The AB hydrolase-1 domain occupies 28–129 (PLVVLLHGFP…RCAGVVGISV (102 aa)). The active-site Nucleophile is the Asp-104. The active-site Proton acceptor is His-333.

The protein belongs to the AB hydrolase superfamily. Epoxide hydrolase family. Homodimer.

It catalyses the reaction an epoxide + H2O = an ethanediol. Functionally, could be involved in detoxification of extraneous host-cell epoxides. Catalyzes the hydrolysis of small aromatic epoxide-containing substrates such as trans-1,3-diphenylpropene oxide, trans and cis-stilbene oxide, and terpenoid epoxide. The protein is Epoxide hydrolase B of Mycobacterium tuberculosis (strain CDC 1551 / Oshkosh).